We begin with the raw amino-acid sequence, 476 residues long: Ovarian-specific serine/threonine-protein kinase Lok (476 aa).

The region spanning 69–129 is the FHA domain; that stretch reads FTAGRGEAND…NGTFVNNEKI (61 aa). The region spanning 174–441 is the Protein kinase domain; the sequence is YYVNRKLGSG…IDDVLQSSWL (268 aa). Residues 180–188 and Lys203 each bind ATP; that span reads LGSGAYGLV. Asp303 serves as the catalytic Proton acceptor.

Belongs to the protein kinase superfamily. CAMK Ser/Thr protein kinase family. CDS1 subfamily. In terms of tissue distribution, in stage 3 embryos, both isoforms are expressed in both somatic and pole cell nuclei. Expression in pole cell nuclei is sustained until stage 9 and weakly expressed after pole cell invagination into the abdominal cavity.

Its subcellular location is the nucleus speckle. It carries out the reaction L-seryl-[protein] + ATP = O-phospho-L-seryl-[protein] + ADP + H(+). The enzyme catalyses L-threonyl-[protein] + ATP = O-phospho-L-threonyl-[protein] + ADP + H(+). Functionally, may have a role in germline establishment. The sequence is that of Ovarian-specific serine/threonine-protein kinase Lok (lok) from Drosophila melanogaster (Fruit fly).